The chain runs to 212 residues: Large ribosomal subunit protein bL25 (212 aa).

Residues 1–16 (MKTRIDLTVEPRETGK) show a composition bias toward basic and acidic residues. Residues 1 to 22 (MKTRIDLTVEPRETGKHNSRGL) form a disordered region.

This sequence belongs to the bacterial ribosomal protein bL25 family. CTC subfamily. Part of the 50S ribosomal subunit; part of the 5S rRNA/L5/L18/L25 subcomplex. Contacts the 5S rRNA. Binds to the 5S rRNA independently of L5 and L18.

This is one of the proteins that binds to the 5S RNA in the ribosome where it forms part of the central protuberance. This Bdellovibrio bacteriovorus (strain ATCC 15356 / DSM 50701 / NCIMB 9529 / HD100) protein is Large ribosomal subunit protein bL25.